The sequence spans 268 residues: Hydroxyethylthiazole kinase (268 aa).

Substrate is bound at residue Met-45. Positions 121 and 167 each coordinate ATP. Gly-194 contributes to the substrate binding site.

This sequence belongs to the Thz kinase family. Requires Mg(2+) as cofactor.

It carries out the reaction 5-(2-hydroxyethyl)-4-methylthiazole + ATP = 4-methyl-5-(2-phosphooxyethyl)-thiazole + ADP + H(+). Its pathway is cofactor biosynthesis; thiamine diphosphate biosynthesis; 4-methyl-5-(2-phosphoethyl)-thiazole from 5-(2-hydroxyethyl)-4-methylthiazole: step 1/1. In terms of biological role, catalyzes the phosphorylation of the hydroxyl group of 4-methyl-5-beta-hydroxyethylthiazole (THZ). This chain is Hydroxyethylthiazole kinase, found in Bacillus cereus (strain ATCC 10987 / NRS 248).